Reading from the N-terminus, the 373-residue chain is 3-isopropylmalate dehydrogenase (373 aa).

82–93 (GPKWGTGALRPE) is an NAD(+) binding site. Residues arginine 100, arginine 110, arginine 139, and aspartate 231 each coordinate substrate. The Mg(2+) site is built by aspartate 231, aspartate 256, and aspartate 260. Position 295–306 (295–306 (GSAPDLPANKVN)) interacts with NAD(+).

The protein belongs to the isocitrate and isopropylmalate dehydrogenases family. Homodimer. It depends on Mg(2+) as a cofactor. Mn(2+) serves as cofactor.

It localises to the cytoplasm. It carries out the reaction (2R,3S)-3-isopropylmalate + NAD(+) = 4-methyl-2-oxopentanoate + CO2 + NADH. The protein operates within amino-acid biosynthesis; L-leucine biosynthesis; L-leucine from 3-methyl-2-oxobutanoate: step 3/4. Catalyzes the oxidation of 3-carboxy-2-hydroxy-4-methylpentanoate (3-isopropylmalate) to 3-carboxy-4-methyl-2-oxopentanoate. The product decarboxylates to 4-methyl-2 oxopentanoate. This Candida maltosa (Yeast) protein is 3-isopropylmalate dehydrogenase (LEU2).